Here is a 685-residue protein sequence, read N- to C-terminus: E3 ubiquitin-protein ligase RNF6 (685 aa).

3 stretches are compositionally biased toward basic and acidic residues: residues 1–10, 17–29, and 88–107; these read MNQSRSRSDG, PQDHNHHENERRW, and DLRDGTNYRDSEVPRESSHE. 6 disordered regions span residues 1–29, 81–107, 121–142, 168–273, 286–345, and 499–576; these read MNQSRSRSDGGSEETLPQDHNHHENERRW, EQLASQPDLRDGTNYRDSEVPRESSHE, GNATRSGQNGNQTWRAVSRTNP, DYTD…REGQ, RSNV…RRRG, and EADS…NPNN. 3 stretches are compositionally biased toward polar residues: residues 199 to 213, 250 to 264, and 286 to 297; these read SQTSVNFNGSSSNIP, ASRTNFSSHTNQSGG, and RSNVTVRNTNQR. Positions 303-313 are enriched in low complexity; it reads LRSTSNSRSRS. 2 stretches are compositionally biased toward polar residues: residues 314-325 and 519-528; these read PIQRQSGTVYHN and ELSNLGTDNN. The segment at 632–673 adopts an RING-type zinc-finger fold; the sequence is CSVCISDYVTGNKLRQLPCMHEFHIHCIDRWLSENCTCPICR.

This sequence belongs to the RNF12 family. Weakly expressed in peripheral blood, spleen, prostate, testis and ovary. According to a report, it is preferentially expressed in testis and ovary and hardly detected in other tissues.

It localises to the nucleus. The protein resides in the cytoplasm. Its subcellular location is the cell projection. It is found in the axon. The protein localises to the PML body. It carries out the reaction S-ubiquitinyl-[E2 ubiquitin-conjugating enzyme]-L-cysteine + [acceptor protein]-L-lysine = [E2 ubiquitin-conjugating enzyme]-L-cysteine + N(6)-ubiquitinyl-[acceptor protein]-L-lysine.. The protein operates within protein modification; protein ubiquitination. Functionally, E3 ubiquitin-protein ligase mediating 'Lys-48'-linked polyubiquitination of LIMK1 and its subsequent targeting to the proteasome for degradation. Negatively regulates axonal outgrowth through regulation of the LIMK1 turnover. Mediates 'Lys-6' and 'Lys-27'-linked polyubiquitination of AR/androgen receptor thereby modulating its transcriptional activity. May also bind DNA and function as a transcriptional regulator. Mediates polyubiquitination of QKI in macrophages, leading to its degradation. The sequence is that of E3 ubiquitin-protein ligase RNF6 from Homo sapiens (Human).